Reading from the N-terminus, the 201-residue chain is Small ribosomal subunit protein uS4 (201 aa).

In terms of domain architecture, S4 RNA-binding spans 103 to 167; that stretch reads RRLQTIVTKK…SKIPQVLEKT (65 aa). Residues 163–201 form a disordered region; sequence VLEKTKSEAPAEETVEAPAEETVEAPAEEKKEESPSTES. A compositionally biased stretch (acidic residues) spans 172–185; sequence PAEETVEAPAEETV. Basic and acidic residues predominate over residues 189–201; that stretch reads AEEKKEESPSTES.

The protein belongs to the universal ribosomal protein uS4 family. Part of the 30S ribosomal subunit. Contacts protein S5. The interaction surface between S4 and S5 is involved in control of translational fidelity.

In terms of biological role, one of the primary rRNA binding proteins, it binds directly to 16S rRNA where it nucleates assembly of the body of the 30S subunit. Functionally, with S5 and S12 plays an important role in translational accuracy. The chain is Small ribosomal subunit protein uS4 from Nitrosopumilus maritimus (strain SCM1).